The sequence spans 422 residues: UDP-N-acetylglucosamine 1-carboxyvinyltransferase (422 aa).

A phosphoenolpyruvate-binding site is contributed by 22–23; that stretch reads KN. Arg-94 contributes to the UDP-N-acetyl-alpha-D-glucosamine binding site. Cys-118 acts as the Proton donor in catalysis. Cys-118 is modified (2-(S-cysteinyl)pyruvic acid O-phosphothioketal). UDP-N-acetyl-alpha-D-glucosamine contacts are provided by residues 123-127, Asp-309, and Ile-331; that span reads RPVDL.

This sequence belongs to the EPSP synthase family. MurA subfamily.

The protein localises to the cytoplasm. It catalyses the reaction phosphoenolpyruvate + UDP-N-acetyl-alpha-D-glucosamine = UDP-N-acetyl-3-O-(1-carboxyvinyl)-alpha-D-glucosamine + phosphate. It functions in the pathway cell wall biogenesis; peptidoglycan biosynthesis. In terms of biological role, cell wall formation. Adds enolpyruvyl to UDP-N-acetylglucosamine. The sequence is that of UDP-N-acetylglucosamine 1-carboxyvinyltransferase from Cereibacter sphaeroides (strain ATCC 17023 / DSM 158 / JCM 6121 / CCUG 31486 / LMG 2827 / NBRC 12203 / NCIMB 8253 / ATH 2.4.1.) (Rhodobacter sphaeroides).